The sequence spans 197 residues: Recombination protein RecR (197 aa).

A C4-type zinc finger spans residues 56–71; that stretch reads CNVCFHFSADPICEIC. A Toprim domain is found at 79–173; the sequence is QTICVVADSR…KVTRIAFGLP (95 aa).

The protein belongs to the RecR family.

Functionally, may play a role in DNA repair. It seems to be involved in an RecBC-independent recombinational process of DNA repair. It may act with RecF and RecO. The sequence is that of Recombination protein RecR from Rippkaea orientalis (strain PCC 8801 / RF-1) (Cyanothece sp. (strain PCC 8801)).